A 533-amino-acid polypeptide reads, in one-letter code: Protein translocase subunit SecD (533 aa).

Helical transmembrane passes span 8 to 28 (ALLV…TFVS), 377 to 397 (IVGG…GGVV), 400 to 420 (LALA…GFTL), 422 to 442 (LPGI…NVLI), 469 to 489 (LTIL…LQFG), and 495 to 515 (GFAV…IFVT).

It belongs to the SecD/SecF family. SecD subfamily. Forms a complex with SecF. Part of the essential Sec protein translocation apparatus which comprises SecA, SecYEG and auxiliary proteins SecDF-YajC and YidC.

The protein resides in the cell inner membrane. Its function is as follows. Part of the Sec protein translocase complex. Interacts with the SecYEG preprotein conducting channel. SecDF uses the proton motive force (PMF) to complete protein translocation after the ATP-dependent function of SecA. The sequence is that of Protein translocase subunit SecD from Syntrophobacter fumaroxidans (strain DSM 10017 / MPOB).